We begin with the raw amino-acid sequence, 373 residues long: Glutamine synthetase (373 aa).

Ala2 is modified (N-acetylalanine). Residues 2-25 (ATSASSHLNKGIKQMYMSLPQGEK) form a required for glutamine-induced ubiquitination by CRL4(CRBN) and proteasomal degradation region. An N6-acetyllysine mark is found at Lys11 and Lys14. Residues 24-106 (EKVQAMYIWV…VLCEVFKYNR (83 aa)) form the GS beta-grasp domain. Tyr104 carries the phosphotyrosine modification. In terms of domain architecture, GS catalytic spans 113–373 (LRHICKRIMD…TGDEPFQYKN (261 aa)). ATP is bound at residue Glu134. Mn(2+) is bound by residues Glu134, Glu136, Glu196, and Glu203. Residue 203–208 (EFQIGP) coordinates ATP. 246–247 (NW) provides a ligand contact to L-glutamate. Position 253 (His253) interacts with Mn(2+). ATP contacts are provided by residues 255–257 (NFS), Arg319, and Arg324. Arg319 contacts L-glutamate. ADP is bound at residue 336–338 (YFE). Mn(2+) is bound at residue Glu338. An L-glutamate-binding site is contributed by Arg340. The residue at position 343 (Ser343) is a Phosphoserine.

Belongs to the glutamine synthetase family. Decamer; composed of two pentamers. Interacts with PALMD. Interacts with RHOJ. Interacts with BEST2; this interaction tethers a fraction of GLUL to the membrane, causing a decrease of cytosolic glutamine synthase (GS) activity and inhibits the chloride channel activity of BEST2 by affecting the gating at the aperture in the absence of intracellular glutamate. Requires Mg(2+) as cofactor. Mn(2+) is required as a cofactor. In terms of processing, acetylated by EP300/p300; acetylation is stimulated by increased glutamine levels and promotes ubiquitin-mediated proteasomal degradation. Palmitoylated; undergoes autopalmitoylation. Post-translationally, ubiquitinated by ZNRF1. Ubiquitinated by the DCX (DDB1-CUL4-X-box) E3 ubiquitin-protein ligase complex called CRL4(CRBN), leading to proteasomal degradation. In terms of tissue distribution, expressed in microvascular endothelial cells.

Its subcellular location is the cytoplasm. The protein resides in the cytosol. It localises to the microsome. It is found in the mitochondrion. The protein localises to the cell membrane. It catalyses the reaction L-glutamate + NH4(+) + ATP = L-glutamine + ADP + phosphate + H(+). The enzyme catalyses L-cysteinyl-[protein] + hexadecanoyl-CoA = S-hexadecanoyl-L-cysteinyl-[protein] + CoA. Its activity is regulated as follows. Glutamine synthetase activity is inhibited by methionine sulfoximine (MSO). In terms of biological role, glutamine synthetase that catalyzes the ATP-dependent conversion of glutamate and ammonia to glutamine. Its role depends on tissue localization: in the brain, it regulates the levels of toxic ammonia and converts neurotoxic glutamate to harmless glutamine, whereas in the liver, it is one of the enzymes responsible for the removal of ammonia. Plays a key role in ammonium detoxification during erythropoiesis: the glutamine synthetase activity is required to remove ammonium generated by porphobilinogen deaminase (HMBS) during heme biosynthesis to prevent ammonium accumulation and oxidative stress. Essential for proliferation of fetal skin fibroblasts. Independently of its glutamine synthetase activity, required for endothelial cell migration during vascular development. Involved in angiogenesis by regulating membrane localization and activation of the GTPase RHOJ, possibly by promoting RHOJ palmitoylation. May act as a palmitoyltransferase for RHOJ: able to autopalmitoylate and then transfer the palmitoyl group to RHOJ. Plays a role in ribosomal 40S subunit biogenesis. Through the interaction with BEST2, inhibits BEST2 channel activity by affecting the gating at the aperture in the absence of intracellular L-glutamate, but sensitizes BEST2 to intracellular L-glutamate, which promotes the opening of BEST2 and thus relieves its inhibitory effect on BEST2. The chain is Glutamine synthetase from Mus musculus (Mouse).